Reading from the N-terminus, the 400-residue chain is Protein phyllopod (400 aa).

Positions 109-127 (QERTKLRPVAMVRPTVRVQ) are interaction with sina. The tract at residues 125-145 (RVQPQSQPQLQPQVPINPTPA) is disordered. Positions 127 to 138 (QPQSQPQLQPQV) are enriched in low complexity. The interaction with ttk stretch occupies residues 241-320 (YQRFPQPSVD…TAISEVLPTA (80 aa)). Residues 319–362 (TARYQVTHEENKENQQAQEMELELEEEEEVDGRAELEVVQEAEA) are a coiled coil. The disordered stretch occupies residues 346-382 (EEVDGRAELEVVQEAEAPLEPQSHHKQGNSHQNSHQA).

Component of some E3 complex at least composed of sina, ebi and phyl, required for the degradation of ttk. In terms of tissue distribution, in embryos, it is ubiquitously present before cellularization. During stages 9-11, it is expressed in neuroblasts and the SOP cells. From stage 12 onward, it decreases, but remains in a subset of PNS cells at stages 12-14. Weakly expressed in wing imaginal disks, in the SOP cells of wing margin bristles, notal macrochaetes, and other sensory organs. In leg disks, it is expressed in the precursors of the femoral chordotonal organs, as well as in external sensory SOP cells. Strongly expressed in the eye-antenna disk, it is specifically expressed in R1, R6 and R7 cells, and not in R3, R3, R4, R5 and R8 cells.

Its subcellular location is the nucleus. Its function is as follows. Essential adapter component of E3 ubiquitin ligase complexes; involved in R7 photoreceptor cell differentiation, embryonic nervous system, external sensory organ development and specification of particular muscles. E3 ubiquitin ligase complexes mediate ubiquitination and subsequent proteasomal degradation of target proteins. Required for specification of R7 photoreceptor cell fate in the eye by participating in the ubiquitination and subsequent proteasomal degradation of Tramtrack (ttk), a general inhibitor of photoreceptor differentiation. Acts downstream of Notch signaling to specify the fate of the SOP (sensory organ precursor) cells and their progeny, probably via the sina-mediated proteasomal degradation of ttk. Its restricted pattern of expression, upon Notch and Ras signaling pathways, suggests that it acts as a key determinant in E3 complexes to trigger protein proteolysis in appropriate cells. The polypeptide is Protein phyllopod (phyl) (Drosophila melanogaster (Fruit fly)).